Consider the following 469-residue polypeptide: Regulator of G-protein signaling 7 (469 aa).

The 76-residue stretch at 37 to 112 folds into the DEP domain; sequence EKNGIPIRTV…DDGTFYRFQT (76 aa). Ser-229 and Ser-241 each carry phosphoserine. The tract at residues 236–255 is disordered; that stretch reads DIRSHSPTHTPTPETKPPTE. The residue at position 243 (Thr-243) is a Phosphothreonine. Residues 255-316 enclose the G protein gamma domain; it reads EDELHQQIKY…LSDDTTFWEL (62 aa). The RGS domain occupies 333-448; sequence GMDEALKDPV…IRSSAYQELL (116 aa). Ser-434 is subject to Phosphoserine.

In terms of assembly, interacts with GNB5, forming the RGS7-GNB5 complex. Interacts with GPR158; promotes the GTPase activator activity of the RGS7-GNB5 complex in absence of glycine, in contrast GTPase activator activity of the RGS7-GNB5 complex is inhibited in presence of glycine. Interacts with GPR179. Interacts with PKD1; this prevents rapid proteasomal degradation. Interacts with RGS7BP, leading to regulate the subcellular location of the heterodimer formed with GNB5. Interacts (phosphorylated form) with 14-3-3 protein YWHAQ. Interacts with SNAPIN. Interacts with GNAI1. Interacts with GNAO1, GNAI3 and GNAZ. Post-translationally, palmitoylated. In terms of processing, ubiquitinated, leading to rapid proteasomal degradation. Phosphorylation and subsequent interaction with 14-3-3 proteins inhibits GAP activity. Detected in brain (at protein level).

It is found in the cytoplasm. It localises to the cytosol. Its subcellular location is the cell membrane. The protein resides in the membrane. In terms of biological role, GTPase activator component of the RGS7-GNB5 complex that regulates G protein-coupled receptor signaling cascades. The RGS7-GNB5 complex acts as an inhibitor signal transduction by promoting the GTPase activity of G protein alpha subunits, such as GNAO1, thereby driving them into their inactive GDP-bound form. May play a role in synaptic vesicle exocytosis. Glycine-dependent regulation of the RGS7-GNB5 complex by GPR158 affects mood and cognition via its ability to regulate neuronal excitability in L2/L3 pyramidal neurons of the prefrontal cortex. Modulates the activity of potassium channels that are activated by GNAO1 in response to muscarinic acetylcholine receptor M2/CHRM2 signaling. This Mus musculus (Mouse) protein is Regulator of G-protein signaling 7 (Rgs7).